The primary structure comprises 771 residues: MQVIKKVEELMGDAKWLVFQEEYNNKLNGKYETLFTLTNGYMGIRGTFEEGSEGERPGSFIAGIFNRGEAQVRELVNVQNWMRLKIYIEGEEIRLDRCELLEFQRILDMKKGVLFRKTVVKDDKGRVTKIEGYRFVSRSNRHRSAIRFFITPLNYEGVIGVENLIEGTVLNSATHPKYRVKHLKVVKNESICKSGIYLETATTDENKRIAVGSTLRIYNLEDINRENIAFFRRFIPLGENSAEYLEFKGEREKTVVVDKFAVTYTSRDVEKDLLKNAVENDLFDFVSRGFDEELEKHIAEYDKLWSVADITIEGDEEADIALRFNIFHLMSSVNEKDPWVSIGAKGLHGEGYKGHVFWDTEIFMLPFFIYVYPEAARTLLMYRYNMLDAARRNAALNGYKGAQYPWESADTGMEETPKWGFDYKGNPVRIWTGDLEHHITADVAFAVWEYFRATNDIDFMLNFGAEIILETARFWASRCEYVEELDRYEINNVIGPDEFHEHVNNNAYTNYFAKWNIKKGLEIIGELKENYPDYYYAITHKISLTPEEVEKWKEVEKKIYIPYDKDKKLIEQFEGYFEKKDYVIEKFDENNMPVWPEGVDVTKLGDTQLIKQADVVMLMLLMPEEFDEETKRINYEYYEKRTMHKSSLSPSMYAIMGLKVGDHRNAYQSFIRSAKVDLADNQGNAVEGIHAASCGGTWQVAVFGFGGLEIDREGVLNINPWLPEKWEKLSYKIFWKGSLLEVTVAKEEVSVKKLKGRETVKIKVKGKEMAL.

358–359 (WD) is a substrate binding site. Residue glutamate 498 is the Proton donor of the active site. 611-612 (KQ) lines the substrate pocket.

This sequence belongs to the glycosyl hydrolase 65 family.

It catalyses the reaction kojibiose + phosphate = beta-D-glucose 1-phosphate + D-glucose. Its function is as follows. Catalyzes the reversible phosphorolysis of kojibiose into beta-D-glucose 1-phosphate (Glc1P) and D-glucose. This chain is Kojibiose phosphorylase (kojP), found in Caldanaerobacter subterraneus subsp. tengcongensis (strain DSM 15242 / JCM 11007 / NBRC 100824 / MB4) (Thermoanaerobacter tengcongensis).